The following is a 412-amino-acid chain: Peptidase T (412 aa).

Residue His-84 participates in Zn(2+) binding. Asp-86 is a catalytic residue. Asp-146 is a binding site for Zn(2+). The active-site Proton acceptor is Glu-179. Residues Glu-180, Asp-202, and His-385 each coordinate Zn(2+).

Belongs to the peptidase M20B family. Requires Zn(2+) as cofactor.

Its subcellular location is the cytoplasm. The enzyme catalyses Release of the N-terminal residue from a tripeptide.. Its function is as follows. Cleaves the N-terminal amino acid of tripeptides. This chain is Peptidase T, found in Haemophilus influenzae (strain ATCC 51907 / DSM 11121 / KW20 / Rd).